Here is a 230-residue protein sequence, read N- to C-terminus: tRNA (guanine-N(7)-)-methyltransferase (230 aa).

Glutamate 61, glutamate 86, aspartate 113, and aspartate 135 together coordinate S-adenosyl-L-methionine. Residue aspartate 135 is part of the active site. Residues lysine 139, aspartate 171, and threonine 209 to glutamate 212 contribute to the substrate site.

It belongs to the class I-like SAM-binding methyltransferase superfamily. TrmB family.

The catalysed reaction is guanosine(46) in tRNA + S-adenosyl-L-methionine = N(7)-methylguanosine(46) in tRNA + S-adenosyl-L-homocysteine. It participates in tRNA modification; N(7)-methylguanine-tRNA biosynthesis. In terms of biological role, catalyzes the formation of N(7)-methylguanine at position 46 (m7G46) in tRNA. The protein is tRNA (guanine-N(7)-)-methyltransferase of Azorhizobium caulinodans (strain ATCC 43989 / DSM 5975 / JCM 20966 / LMG 6465 / NBRC 14845 / NCIMB 13405 / ORS 571).